Consider the following 179-residue polypeptide: MARLLEYYRDTVTKELTQKFNYKTVMEVPKITKITLNMGVGEASTDKKIIENAVSDLEKISAQKPVVTKARKSIATFKVRQGYPVGCKVTLRGVKMYEFLDRLVNVAIPRIRDFRGIQVKGFDGRGNFNMGIKEQIIFPEIDYDKIDKVRGLNITVTTTAKTDQEARALLSAFKFPFKN.

It belongs to the universal ribosomal protein uL5 family. As to quaternary structure, part of the 50S ribosomal subunit; part of the 5S rRNA/L5/L18/L25 subcomplex. Contacts the 5S rRNA and the P site tRNA. Forms a bridge to the 30S subunit in the 70S ribosome.

Its function is as follows. This is one of the proteins that bind and probably mediate the attachment of the 5S RNA into the large ribosomal subunit, where it forms part of the central protuberance. In the 70S ribosome it contacts protein S13 of the 30S subunit (bridge B1b), connecting the 2 subunits; this bridge is implicated in subunit movement. Contacts the P site tRNA; the 5S rRNA and some of its associated proteins might help stabilize positioning of ribosome-bound tRNAs. This Nitrosomonas europaea (strain ATCC 19718 / CIP 103999 / KCTC 2705 / NBRC 14298) protein is Large ribosomal subunit protein uL5.